A 345-amino-acid chain; its full sequence is Anthranilate phosphoribosyltransferase (345 aa).

5-phospho-alpha-D-ribose 1-diphosphate contacts are provided by residues glycine 79, 82-83 (GD), threonine 87, 89-92 (NVST), 106-114 (KHGNRAVSG), and serine 118. Anthranilate is bound at residue glycine 79. Residue serine 91 coordinates Mg(2+). An anthranilate-binding site is contributed by asparagine 109. An anthranilate-binding site is contributed by arginine 164. Mg(2+) is bound by residues aspartate 223 and glutamate 224.

It belongs to the anthranilate phosphoribosyltransferase family. As to quaternary structure, homodimer. Requires Mg(2+) as cofactor.

It carries out the reaction N-(5-phospho-beta-D-ribosyl)anthranilate + diphosphate = 5-phospho-alpha-D-ribose 1-diphosphate + anthranilate. Its pathway is amino-acid biosynthesis; L-tryptophan biosynthesis; L-tryptophan from chorismate: step 2/5. In terms of biological role, catalyzes the transfer of the phosphoribosyl group of 5-phosphorylribose-1-pyrophosphate (PRPP) to anthranilate to yield N-(5'-phosphoribosyl)-anthranilate (PRA). The protein is Anthranilate phosphoribosyltransferase of Saccharolobus islandicus (strain M.16.27) (Sulfolobus islandicus).